Here is a 182-residue protein sequence, read N- to C-terminus: Bifunctional protein PyrR (182 aa).

The short motif at 100–112 is the PRPP-binding element; that stretch reads VVLVDDVLYTGRT.

This sequence belongs to the purine/pyrimidine phosphoribosyltransferase family. PyrR subfamily. As to quaternary structure, homodimer and homohexamer; in equilibrium.

The enzyme catalyses UMP + diphosphate = 5-phospho-alpha-D-ribose 1-diphosphate + uracil. In terms of biological role, regulates transcriptional attenuation of the pyrimidine nucleotide (pyr) operon by binding in a uridine-dependent manner to specific sites on pyr mRNA. This disrupts an antiterminator hairpin in the RNA and favors formation of a downstream transcription terminator, leading to a reduced expression of downstream genes. Its function is as follows. Also displays a weak uracil phosphoribosyltransferase activity which is not physiologically significant. The chain is Bifunctional protein PyrR from Natranaerobius thermophilus (strain ATCC BAA-1301 / DSM 18059 / JW/NM-WN-LF).